An 82-amino-acid polypeptide reads, in one-letter code: Kappa-actitoxin-Avd4j (82 aa).

The signal sequence occupies residues 1-19 (MNKALFLCLVVLCAAVVFA). A propeptide spanning residues 20–31 (AEDLQKAKHAPF) is cleaved from the precursor. 3 cysteine pairs are disulfide-bonded: Cys-38-Cys-73, Cys-40-Cys-66, and Cys-56-Cys-74.

Belongs to the sea anemone type 3 (BDS) potassium channel toxin family. In terms of tissue distribution, weakly expressed in the ectodermal tissue from the distal and proximal tentacles, body wall, and oral disk.

It localises to the secreted. The protein resides in the nematocyst. In terms of biological role, blocks Kv3 voltage-gated potassium channels. Reduces blood pressure. This chain is Kappa-actitoxin-Avd4j, found in Anemonia viridis (Snakelocks anemone).